Here is a 191-residue protein sequence, read N- to C-terminus: Protein YceI (191 aa).

The signal sequence occupies residues 1 to 22; the sequence is MKKSLLGLTFASLMFSAGSAVA.

The protein belongs to the UPF0312 family. Type 1 subfamily.

Its subcellular location is the periplasm. This Shigella flexneri protein is Protein YceI.